A 230-amino-acid chain; its full sequence is uncharacterized protein (230 aa).

A helical membrane pass occupies residues 93-115 (VFLYYFLIVYTSGNVDLISRFLF).

This sequence belongs to the DUP/COS family.

The protein localises to the membrane. This is an uncharacterized protein from Saccharomyces cerevisiae (strain ATCC 204508 / S288c) (Baker's yeast).